The primary structure comprises 282 residues: Bis(5'-nucleosyl)-tetraphosphatase, symmetrical (282 aa).

This sequence belongs to the Ap4A hydrolase family.

It carries out the reaction P(1),P(4)-bis(5'-adenosyl) tetraphosphate + H2O = 2 ADP + 2 H(+). In terms of biological role, hydrolyzes diadenosine 5',5'''-P1,P4-tetraphosphate to yield ADP. The protein is Bis(5'-nucleosyl)-tetraphosphatase, symmetrical of Paraburkholderia phymatum (strain DSM 17167 / CIP 108236 / LMG 21445 / STM815) (Burkholderia phymatum).